Reading from the N-terminus, the 248-residue chain is Meiotically up-regulated gene 65 protein (248 aa).

Has a role in meiosis. In Schizosaccharomyces pombe (strain 972 / ATCC 24843) (Fission yeast), this protein is Meiotically up-regulated gene 65 protein (mug65).